A 91-amino-acid polypeptide reads, in one-letter code: Early E3B 10.4 kDa protein (91 aa).

The N-terminal stretch at Met1–Ala22 is a signal peptide. Topologically, residues Ala23 to Ala34 are lumenal. Residues Phe35–Ile60 form a helical membrane-spanning segment. Over Gln61–Leu91 the chain is Cytoplasmic.

The protein belongs to the adenoviridae E3B family.

It localises to the host endoplasmic reticulum membrane. Down-regulates the EGF receptor. This is Early E3B 10.4 kDa protein from Homo sapiens (Human).